Here is a 416-residue protein sequence, read N- to C-terminus: 2,3-bisphosphoglycerate-independent phosphoglycerate mutase (416 aa).

Belongs to the BPG-independent phosphoglycerate mutase family. A-PGAM subfamily.

The enzyme catalyses (2R)-2-phosphoglycerate = (2R)-3-phosphoglycerate. The protein operates within carbohydrate degradation; glycolysis; pyruvate from D-glyceraldehyde 3-phosphate: step 3/5. Catalyzes the interconversion of 2-phosphoglycerate and 3-phosphoglycerate. The protein is 2,3-bisphosphoglycerate-independent phosphoglycerate mutase of Ignicoccus hospitalis (strain KIN4/I / DSM 18386 / JCM 14125).